Consider the following 275-residue polypeptide: MAQALGFAYRMAVPAAIGVAVLQSSIYDVKGGSRAVIFDRLSGVKETVINEGTHFLVPWLQRSIVFDVRTKPRNIATTTGSKDLQMVSLTLRVLHRPEVQALPKIYQNLGQDYDERVLPSIGNEVLKSIVAQFDAAELITQREAVSQRISSDLRKRAAEFNIALEDVSITHMTFGKEFTKAVEQKQIAQQDAERARFIVEKAEQERQANVIRAEGEAESAETISKAIAKNGDGLVQIRKIEASRDIAATLAANPNVVYLPSGGKSGSQMLLNVGR.

The short motif at 106–109 (YQNL) is the AIM element.

It belongs to the prohibitin family. In terms of assembly, the mitochondrial prohibitin complex consists of two subunits (PHB1 and PHB2). The subunits assemble into a membrane-associated ring-shaped supercomplex of approximately 1 mDa. Interacts with ATG24/SNX4; the interaction is direct and plays a role in mitophagy.

Its subcellular location is the mitochondrion inner membrane. Its function is as follows. Prohibitin probably acts as a holdase/unfoldase for the stabilization of newly synthesized mitochondrial proteins. Involved in mitophagy. Required for the switch to necrotrophic growth. In Colletotrichum higginsianum (strain IMI 349063) (Crucifer anthracnose fungus), this protein is Prohibitin-1.